The following is a 376-amino-acid chain: Queuine tRNA-ribosyltransferase (376 aa).

The active-site Proton acceptor is Asp-90. Residues 90-94 (DSGGF), Asp-144, Gln-193, and Gly-220 each bind substrate. The segment at 251-257 (GVGTPED) is RNA binding. Catalysis depends on Asp-270, which acts as the Nucleophile. An RNA binding; important for wobble base 34 recognition region spans residues 275–279 (TRNAR). Positions 308, 310, 313, and 339 each coordinate Zn(2+).

Belongs to the queuine tRNA-ribosyltransferase family. In terms of assembly, homodimer. Within each dimer, one monomer is responsible for RNA recognition and catalysis, while the other monomer binds to the replacement base PreQ1. Zn(2+) is required as a cofactor.

The catalysed reaction is 7-aminomethyl-7-carbaguanine + guanosine(34) in tRNA = 7-aminomethyl-7-carbaguanosine(34) in tRNA + guanine. The protein operates within tRNA modification; tRNA-queuosine biosynthesis. Its function is as follows. Catalyzes the base-exchange of a guanine (G) residue with the queuine precursor 7-aminomethyl-7-deazaguanine (PreQ1) at position 34 (anticodon wobble position) in tRNAs with GU(N) anticodons (tRNA-Asp, -Asn, -His and -Tyr). Catalysis occurs through a double-displacement mechanism. The nucleophile active site attacks the C1' of nucleotide 34 to detach the guanine base from the RNA, forming a covalent enzyme-RNA intermediate. The proton acceptor active site deprotonates the incoming PreQ1, allowing a nucleophilic attack on the C1' of the ribose to form the product. After dissociation, two additional enzymatic reactions on the tRNA convert PreQ1 to queuine (Q), resulting in the hypermodified nucleoside queuosine (7-(((4,5-cis-dihydroxy-2-cyclopenten-1-yl)amino)methyl)-7-deazaguanosine). In Cupriavidus necator (strain ATCC 17699 / DSM 428 / KCTC 22496 / NCIMB 10442 / H16 / Stanier 337) (Ralstonia eutropha), this protein is Queuine tRNA-ribosyltransferase.